The primary structure comprises 493 residues: Proline--tRNA ligase (493 aa).

This sequence belongs to the class-II aminoacyl-tRNA synthetase family. ProS type 3 subfamily. In terms of assembly, homodimer.

It localises to the cytoplasm. The catalysed reaction is tRNA(Pro) + L-proline + ATP = L-prolyl-tRNA(Pro) + AMP + diphosphate. Functionally, catalyzes the attachment of proline to tRNA(Pro) in a two-step reaction: proline is first activated by ATP to form Pro-AMP and then transferred to the acceptor end of tRNA(Pro). This Porphyromonas gingivalis (strain ATCC BAA-308 / W83) protein is Proline--tRNA ligase.